We begin with the raw amino-acid sequence, 523 residues long: AarF domain-containing protein kinase 1 (523 aa).

Residues 148–484 enclose the Protein kinase domain; that stretch reads EFEEKPLGAA…SLWSYIHISL (337 aa). Residues 154 to 162 and Lys-176 each bind ATP; that span reads LGAASLAQV. Asp-308 serves as the catalytic Proton acceptor.

It belongs to the protein kinase superfamily. ADCK protein kinase family.

Its subcellular location is the mitochondrion. Its function is as follows. Appears to be essential for maintaining mitochondrial cristae formation and mitochondrial function by acting via YME1L1 in a kinase-independent manner to regulate essential mitochondrial structural proteins OPA1 and IMMT. The action of this enzyme is not yet clear. It is not known if it has protein kinase activity and what type of substrate it would phosphorylate (Ser, Thr or Tyr). The protein is AarF domain-containing protein kinase 1 (adck1) of Xenopus tropicalis (Western clawed frog).